The following is a 431-amino-acid chain: Aspartokinase (431 aa).

The protein belongs to the aspartokinase family.

The enzyme catalyses L-aspartate + ATP = 4-phospho-L-aspartate + ADP. It functions in the pathway amino-acid biosynthesis; L-lysine biosynthesis via DAP pathway; (S)-tetrahydrodipicolinate from L-aspartate: step 1/4. It participates in amino-acid biosynthesis; L-methionine biosynthesis via de novo pathway; L-homoserine from L-aspartate: step 1/3. Its pathway is amino-acid biosynthesis; L-threonine biosynthesis; L-threonine from L-aspartate: step 1/5. In Chlamydia trachomatis serovar D (strain ATCC VR-885 / DSM 19411 / UW-3/Cx), this protein is Aspartokinase (lysC).